Here is a 180-residue protein sequence, read N- to C-terminus: ATP-dependent protease subunit HslV (180 aa).

Residue Thr2 is part of the active site. Residues Gly157, Cys160, and Ser163 each contribute to the Na(+) site.

The protein belongs to the peptidase T1B family. HslV subfamily. As to quaternary structure, a double ring-shaped homohexamer of HslV is capped on each side by a ring-shaped HslU homohexamer. The assembly of the HslU/HslV complex is dependent on binding of ATP.

The protein localises to the cytoplasm. It catalyses the reaction ATP-dependent cleavage of peptide bonds with broad specificity.. With respect to regulation, allosterically activated by HslU binding. Its function is as follows. Protease subunit of a proteasome-like degradation complex believed to be a general protein degrading machinery. This chain is ATP-dependent protease subunit HslV, found in Wigglesworthia glossinidia brevipalpis.